We begin with the raw amino-acid sequence, 234 residues long: Ubiquitin domain-containing protein 2 (234 aa).

The disordered stretch occupies residues 1-46 (MGGCVGAQHDSSGSLNENSEGTGVALGRNQPLKKEKPKWKSDYPMT). The segment covering 9-21 (HDSSGSLNENSEG) has biased composition (polar residues). Residues 32–41 (LKKEKPKWKS) show a composition bias toward basic and acidic residues. The Ubiquitin-like domain occupies 152–227 (SQLRLRLSTG…VQVIMSQPLQ (76 aa)).

It localises to the cytoplasm. In Bos taurus (Bovine), this protein is Ubiquitin domain-containing protein 2 (UBTD2).